Reading from the N-terminus, the 388-residue chain is Succinate--CoA ligase [ADP-forming] subunit beta (388 aa).

The ATP-grasp domain occupies Lys-9–His-244. ATP contacts are provided by residues Lys-46, Gly-53–Gly-55, Glu-99, Thr-102, and Glu-107. Residues Asn-199 and Asp-213 each contribute to the Mg(2+) site. Residues Asn-264 and Gly-321–Val-323 contribute to the substrate site.

The protein belongs to the succinate/malate CoA ligase beta subunit family. Heterotetramer of two alpha and two beta subunits. Mg(2+) serves as cofactor.

It carries out the reaction succinate + ATP + CoA = succinyl-CoA + ADP + phosphate. The enzyme catalyses GTP + succinate + CoA = succinyl-CoA + GDP + phosphate. It participates in carbohydrate metabolism; tricarboxylic acid cycle; succinate from succinyl-CoA (ligase route): step 1/1. Functionally, succinyl-CoA synthetase functions in the citric acid cycle (TCA), coupling the hydrolysis of succinyl-CoA to the synthesis of either ATP or GTP and thus represents the only step of substrate-level phosphorylation in the TCA. The beta subunit provides nucleotide specificity of the enzyme and binds the substrate succinate, while the binding sites for coenzyme A and phosphate are found in the alpha subunit. The protein is Succinate--CoA ligase [ADP-forming] subunit beta of Shewanella denitrificans (strain OS217 / ATCC BAA-1090 / DSM 15013).